We begin with the raw amino-acid sequence, 51 residues long: Ovomucoid (51 aa).

Residues 3-51 (VDCSGYPKPDCTLESFPLCGSDNQTYSNKCAFCNAAVERNVTLRHLGEC) enclose the Kazal-like domain. 3 disulfide bridges follow: Cys-5–Cys-35, Cys-13–Cys-32, and Cys-21–Cys-51. An N-linked (GlcNAc...) asparagine glycan is attached at Asn-42.

Its subcellular location is the secreted. In Rhynchotus rufescens (Red-winged tinamou), this protein is Ovomucoid.